Here is a 405-residue protein sequence, read N- to C-terminus: Caspase-1 (405 aa).

Positions 1-91 (MADKVLKEKR…HLAETLRLSS (91 aa)) constitute a CARD domain. Positions 1–119 (MADKVLKEKR…SSPALQAMPD (119 aa)) are excised as a propeptide. Catalysis depends on residues His238 and Cys286. Positions 299 to 317 (STGTSGNSSSLAPDDFEDD) are excised as a propeptide. Ser303 carries the post-translational modification Phosphoserine.

This sequence belongs to the peptidase C14A family. Heterotetramer that consists of two anti-parallel arranged heterodimers, each one formed by a 20 kDa (Caspase-1 subunit p20) and a 10 kDa (Caspase-1 subunit p10) subunit. May be a component of the inflammasome, a protein complex which also includes PYCARD, CARD8 and NLRP2 and whose function would be the activation of pro-inflammatory caspases. Component of the AIM2 PANoptosome complex, a multiprotein complex that drives inflammatory cell death (PANoptosis). Both the p10 and p20 subunits interact with MEFV. Interacts with CARD17P/INCA and CARD18. Interacts with SERPINB1; this interaction regulates CASP1 activity. In terms of assembly, heterotetramer that consists of two anti-parallel arranged heterodimers, each one formed by a 20 kDa (Caspase-1 subunit p20) and a 10 kDa (Caspase-1 subunit p10) subunit. In terms of processing, the two subunits are derived from the precursor sequence by an autocatalytic mechanism. Post-translationally, ubiquitinated via 'Lys-11'-linked polyubiquitination. Deubiquitinated by USP8.

It localises to the cytoplasm. It is found in the cell membrane. The catalysed reaction is Strict requirement for an Asp residue at position P1 and has a preferred cleavage sequence of Tyr-Val-Ala-Asp-|-.. Functionally, thiol protease involved in a variety of inflammatory processes by proteolytically cleaving other proteins, such as the precursors of the inflammatory cytokines interleukin-1 beta (IL1B) and interleukin 18 (IL18) as well as the pyroptosis inducer Gasdermin-D (GSDMD), into active mature peptides. Plays a key role in cell immunity as an inflammatory response initiator: once activated through formation of an inflammasome complex, it initiates a pro-inflammatory response through the cleavage of the two inflammatory cytokines IL1B and IL18, releasing the mature cytokines which are involved in a variety of inflammatory processes. Cleaves a tetrapeptide after an Asp residue at position P1. Also initiates pyroptosis, a programmed lytic cell death pathway, through cleavage of GSDMD. In contrast to cleavage of interleukin IL1B, recognition and cleavage of GSDMD is not strictly dependent on the consensus cleavage site but depends on an exosite interface on CASP1 that recognizes and binds the Gasdermin-D, C-terminal (GSDMD-CT) part. Cleaves and activates CASP7 in response to bacterial infection, promoting plasma membrane repair. Upon inflammasome activation, during DNA virus infection but not RNA virus challenge, controls antiviral immunity through the cleavage of CGAS, rendering it inactive. In apoptotic cells, cleaves SPHK2 which is released from cells and remains enzymatically active extracellularly. This Equus caballus (Horse) protein is Caspase-1 (CASP1).